The chain runs to 382 residues: Alkanesulfonate monooxygenase (382 aa).

It belongs to the SsuD family. As to quaternary structure, homotetramer.

The catalysed reaction is an alkanesulfonate + FMNH2 + O2 = an aldehyde + FMN + sulfite + H2O + 2 H(+). In terms of biological role, catalyzes the desulfonation of aliphatic sulfonates. The polypeptide is Alkanesulfonate monooxygenase (Yersinia pseudotuberculosis serotype O:1b (strain IP 31758)).